A 91-amino-acid chain; its full sequence is Small ribosomal subunit protein uS19 (91 aa).

The protein belongs to the universal ribosomal protein uS19 family.

Functionally, protein S19 forms a complex with S13 that binds strongly to the 16S ribosomal RNA. The polypeptide is Small ribosomal subunit protein uS19 (Hahella chejuensis (strain KCTC 2396)).